The chain runs to 1908 residues: Putative ankyrin repeat protein L484 (1908 aa).

5 ANK repeats span residues 20-50 (DIME…KFNI), 60-97 (PNKT…PMDL), 101-130 (DNVW…SIDR), 134-167 (SNNT…DIDK), and 1370-1399 (DGNT…NPFT). Positions 1539–1603 (VQLLNPKLRD…QTNISDLEFK (65 aa)) form a coiled coil.

The protein resides in the virion. This chain is Putative ankyrin repeat protein L484, found in Acanthamoeba polyphaga mimivirus (APMV).